The chain runs to 245 residues: Dehydrogenase/reductase SDR family member 6 (245 aa).

NAD(+)-binding positions include Gln-16 to Ile-18, Asp-37, and Asp-58. Position 144 (Arg-144) interacts with substrate. Tyr-147 serves as the catalytic Proton acceptor. NAD(+) contacts are provided by residues Lys-151 and Val-180–Ser-184. Arg-188 and Arg-205 together coordinate substrate.

It belongs to the short-chain dehydrogenases/reductases (SDR) family. As to quaternary structure, homotetramer.

The protein resides in the cytoplasm. It catalyses the reaction cis-4-hydroxy-L-proline + NAD(+) = 4-oxo-L-proline + NADH + H(+). It carries out the reaction (R)-3-hydroxybutanoate + NAD(+) = acetoacetate + NADH + H(+). It participates in amino-acid metabolism. The protein operates within siderophore biosynthesis. In terms of biological role, NAD(H)-dependent dehydrogenase/reductase with a preference for cyclic substrates. Catalyzes stereoselective conversion of 4-oxo-L-proline to cis-4-hydroxy-L-proline, likely a detoxification mechanism for ketoprolines. Mediates the formation of 2,5-dihydroxybenzoate (2,5-DHBA), a siderophore that chelates free cytoplasmic iron, thereby regulating iron transport and homeostasis while protecting cells against free radical-induced oxidative stress. The iron-siderophore complex is imported into mitochondria, providing an iron source for mitochondrial metabolic processes in particular heme synthesis. May act as a 3-hydroxybutyrate dehydrogenase. This chain is Dehydrogenase/reductase SDR family member 6 (bdh2), found in Xenopus laevis (African clawed frog).